Consider the following 64-residue polypeptide: MPKMKTRKAVASKFRVTATGKLKASRPGRRHKLTGKTPKRKRQLRRPGLVDDGHLKTYKRLMCL.

A disordered region spans residues Thr19–Leu44. Positions Lys23–Leu44 are enriched in basic residues.

The protein belongs to the bacterial ribosomal protein bL35 family.

The sequence is that of Large ribosomal subunit protein bL35 from Protochlamydia amoebophila (strain UWE25).